The sequence spans 139 residues: Holo-[acyl-carrier-protein] synthase (139 aa).

Residues Asp8 and Glu61 each contribute to the Mg(2+) site.

It belongs to the P-Pant transferase superfamily. AcpS family. The cofactor is Mg(2+).

It localises to the cytoplasm. It catalyses the reaction apo-[ACP] + CoA = holo-[ACP] + adenosine 3',5'-bisphosphate + H(+). In terms of biological role, transfers the 4'-phosphopantetheine moiety from coenzyme A to a Ser of acyl-carrier-protein. The chain is Holo-[acyl-carrier-protein] synthase from Bradyrhizobium diazoefficiens (strain JCM 10833 / BCRC 13528 / IAM 13628 / NBRC 14792 / USDA 110).